A 263-amino-acid chain; its full sequence is Thiamine thiazole synthase (263 aa).

NAD(+) is bound by residues serine 36, 55 to 56 (ER), glycine 63, valine 127, and 157 to 159 (HVD). Aspartate 159 and histidine 174 together coordinate Fe cation. Methionine 228 is an NAD(+) binding site. A glycine-binding site is contributed by arginine 238.

This sequence belongs to the THI4 family. Homooctamer; tetramer of dimers. Requires Fe(2+) as cofactor.

It carries out the reaction hydrogen sulfide + glycine + NAD(+) = ADP-5-ethyl-4-methylthiazole-2-carboxylate + nicotinamide + 3 H2O + H(+). It participates in cofactor biosynthesis; thiamine diphosphate biosynthesis. In terms of biological role, involved in the biosynthesis of the thiazole moiety of thiamine. Catalyzes the conversion of NAD and glycine to adenosine diphosphate 5-(2-hydroxyethyl)-4-methylthiazole-2-carboxylate (ADT), an adenylated thiazole intermediate, using free sulfide as a source of sulfur. The polypeptide is Thiamine thiazole synthase (Solidesulfovibrio magneticus (strain ATCC 700980 / DSM 13731 / RS-1) (Desulfovibrio magneticus)).